A 287-amino-acid chain; its full sequence is MVLIKEFRIPLPLTVEEYKVAQLFMVATISKKNTSLGEGIEVIENKPYADGATTGFFTRKIFHLGGRLPTWLRSFAPTSLQIEEKAWNAYPYCKTSYACPLLGDRFSVSIETRYEPDSGTQDNCLNLNSEELSIREVEHIDIVNDPIDEAHYKPEEDPKIFQSVKTGRGKLQNDWMKSTKPIMCCYKVCKVEFRCWGVQNKVENFIQRVALRDTFFMGHRQIFCWIDQWFDMDMESLREFEKKTNEEMKAQFHNNNNNNSNNSNNNNNNNTQPQRSSFFSRSTDGNK.

The segment at 252-287 (FHNNNNNNSNNSNNNNNNNTQPQRSSFFSRSTDGNK) is disordered. Positions 254–270 (NNNNNNSNNSNNNNNNN) are enriched in low complexity. Residues 271–287 (TQPQRSSFFSRSTDGNK) show a composition bias toward polar residues.

This sequence belongs to the PtdIns transfer protein family. PI transfer class IIA subfamily.

In terms of biological role, phosphatidylinositol transfer proteins mediate the monomeric transport of lipids by shielding a lipid from the aqueous environment and binding the lipid in a hydrophobic cavity. In Dictyostelium discoideum (Social amoeba), this protein is Phosphatidylinositol transfer protein 5 (pitE).